The chain runs to 211 residues: Protein-methionine-sulfoxide reductase heme-binding subunit MsrQ (211 aa).

5 helical membrane passes run 17–37 (LAGL…GLGA), 54–74 (FLLA…PLLI), 82–102 (LWCF…ELGV), 116–136 (PYLT…FTST), and 153–173 (FVYL…KIIS).

This sequence belongs to the MsrQ family. Heterodimer of a catalytic subunit (MsrP) and a heme-binding subunit (MsrQ). Requires FMN as cofactor. Heme b serves as cofactor.

It is found in the cell inner membrane. Functionally, part of the MsrPQ system that repairs oxidized periplasmic proteins containing methionine sulfoxide residues (Met-O), using respiratory chain electrons. Thus protects these proteins from oxidative-stress damage caused by reactive species of oxygen and chlorine generated by the host defense mechanisms. MsrPQ is essential for the maintenance of envelope integrity under bleach stress, rescuing a wide series of structurally unrelated periplasmic proteins from methionine oxidation, including the primary periplasmic chaperone SurA and the lipoprotein Pal. MsrQ provides electrons for reduction to the reductase catalytic subunit MsrP, using the quinone pool of the respiratory chain. The sequence is that of Protein-methionine-sulfoxide reductase heme-binding subunit MsrQ from Escherichia coli (strain SMS-3-5 / SECEC).